The primary structure comprises 351 residues: UDP-3-O-acylglucosamine N-acyltransferase (351 aa).

H240 functions as the Proton acceptor in the catalytic mechanism.

Belongs to the transferase hexapeptide repeat family. LpxD subfamily. In terms of assembly, homotrimer.

The enzyme catalyses a UDP-3-O-[(3R)-3-hydroxyacyl]-alpha-D-glucosamine + a (3R)-hydroxyacyl-[ACP] = a UDP-2-N,3-O-bis[(3R)-3-hydroxyacyl]-alpha-D-glucosamine + holo-[ACP] + H(+). The protein operates within bacterial outer membrane biogenesis; LPS lipid A biosynthesis. Its function is as follows. Catalyzes the N-acylation of UDP-3-O-acylglucosamine using 3-hydroxyacyl-ACP as the acyl donor. Is involved in the biosynthesis of lipid A, a phosphorylated glycolipid that anchors the lipopolysaccharide to the outer membrane of the cell. The protein is UDP-3-O-acylglucosamine N-acyltransferase of Pseudomonas fluorescens (strain Pf0-1).